A 503-amino-acid polypeptide reads, in one-letter code: Probable cytosol aminopeptidase (503 aa).

Mn(2+) is bound by residues K274 and D279. K286 is an active-site residue. Mn(2+) contacts are provided by D297, D356, and E358. The active site involves R360.

The protein belongs to the peptidase M17 family. Mn(2+) serves as cofactor.

The protein localises to the cytoplasm. The enzyme catalyses Release of an N-terminal amino acid, Xaa-|-Yaa-, in which Xaa is preferably Leu, but may be other amino acids including Pro although not Arg or Lys, and Yaa may be Pro. Amino acid amides and methyl esters are also readily hydrolyzed, but rates on arylamides are exceedingly low.. It carries out the reaction Release of an N-terminal amino acid, preferentially leucine, but not glutamic or aspartic acids.. Functionally, presumably involved in the processing and regular turnover of intracellular proteins. Catalyzes the removal of unsubstituted N-terminal amino acids from various peptides. The sequence is that of Probable cytosol aminopeptidase from Burkholderia pseudomallei (strain 1106a).